Here is a 431-residue protein sequence, read N- to C-terminus: Cytochrome c oxidase subunit 3 (431 aa).

7 helical membrane passes run 70 to 90, 96 to 116, 132 to 152, 176 to 196, 321 to 341, 356 to 376, and 408 to 428; these read IAPL…FGVI, FVIA…SIVF, LVMG…SFFW, VYSY…SGAI, LYFT…EYYF, FLLT…IGII, and LFYW…IYWW.

The protein belongs to the cytochrome c oxidase subunit 3 family. In terms of assembly, component of the cytochrome c oxidase (complex IV, CIV), a multisubunit enzyme composed of a catalytic core of 3 subunits and several supernumerary subunits. The complex exists as a monomer or a dimer and forms supercomplexes (SCs) in the inner mitochondrial membrane with ubiquinol-cytochrome c oxidoreductase (cytochrome b-c1 complex, complex III, CIII).

The protein resides in the mitochondrion inner membrane. The catalysed reaction is 4 Fe(II)-[cytochrome c] + O2 + 8 H(+)(in) = 4 Fe(III)-[cytochrome c] + 2 H2O + 4 H(+)(out). Functionally, component of the cytochrome c oxidase, the last enzyme in the mitochondrial electron transport chain which drives oxidative phosphorylation. The respiratory chain contains 3 multisubunit complexes succinate dehydrogenase (complex II, CII), ubiquinol-cytochrome c oxidoreductase (cytochrome b-c1 complex, complex III, CIII) and cytochrome c oxidase (complex IV, CIV), that cooperate to transfer electrons derived from NADH and succinate to molecular oxygen, creating an electrochemical gradient over the inner membrane that drives transmembrane transport and the ATP synthase. Cytochrome c oxidase is the component of the respiratory chain that catalyzes the reduction of oxygen to water. Electrons originating from reduced cytochrome c in the intermembrane space (IMS) are transferred via the dinuclear copper A center (CU(A)) of subunit 2 and heme A of subunit 1 to the active site in subunit 1, a binuclear center (BNC) formed by heme A3 and copper B (CU(B)). The BNC reduces molecular oxygen to 2 water molecules using 4 electrons from cytochrome c in the IMS and 4 protons from the mitochondrial matrix. The protein is Cytochrome c oxidase subunit 3 (cox3) of Dictyostelium citrinum (Slime mold).